The primary structure comprises 242 residues: Probable transcriptional regulatory protein PXO_01555 (242 aa).

The protein belongs to the TACO1 family.

The protein localises to the cytoplasm. In Xanthomonas oryzae pv. oryzae (strain PXO99A), this protein is Probable transcriptional regulatory protein PXO_01555.